The sequence spans 342 residues: Holliday junction branch migration complex subunit RuvB (342 aa).

The segment at 4-182 (TDRLLSAGRR…FGIPIRLQFY (179 aa)) is large ATPase domain (RuvB-L). Residues Leu21, Arg22, Gly63, Lys66, Thr67, Thr68, Arg172, Tyr182, and Arg219 each coordinate ATP. Thr67 is a Mg(2+) binding site. Residues 183-253 (TVEELERVVS…VADQSLNRLE (71 aa)) form a small ATPAse domain (RuvB-S) region. Positions 256 to 342 (NLGLDAMDRR…EAGQDGLFDV (87 aa)) are head domain (RuvB-H). Residues Arg292, Arg311, and Arg316 each contribute to the DNA site.

The protein belongs to the RuvB family. As to quaternary structure, homohexamer. Forms an RuvA(8)-RuvB(12)-Holliday junction (HJ) complex. HJ DNA is sandwiched between 2 RuvA tetramers; dsDNA enters through RuvA and exits via RuvB. An RuvB hexamer assembles on each DNA strand where it exits the tetramer. Each RuvB hexamer is contacted by two RuvA subunits (via domain III) on 2 adjacent RuvB subunits; this complex drives branch migration. In the full resolvosome a probable DNA-RuvA(4)-RuvB(12)-RuvC(2) complex forms which resolves the HJ.

It localises to the cytoplasm. The catalysed reaction is ATP + H2O = ADP + phosphate + H(+). Its function is as follows. The RuvA-RuvB-RuvC complex processes Holliday junction (HJ) DNA during genetic recombination and DNA repair, while the RuvA-RuvB complex plays an important role in the rescue of blocked DNA replication forks via replication fork reversal (RFR). RuvA specifically binds to HJ cruciform DNA, conferring on it an open structure. The RuvB hexamer acts as an ATP-dependent pump, pulling dsDNA into and through the RuvAB complex. RuvB forms 2 homohexamers on either side of HJ DNA bound by 1 or 2 RuvA tetramers; 4 subunits per hexamer contact DNA at a time. Coordinated motions by a converter formed by DNA-disengaged RuvB subunits stimulates ATP hydrolysis and nucleotide exchange. Immobilization of the converter enables RuvB to convert the ATP-contained energy into a lever motion, pulling 2 nucleotides of DNA out of the RuvA tetramer per ATP hydrolyzed, thus driving DNA branch migration. The RuvB motors rotate together with the DNA substrate, which together with the progressing nucleotide cycle form the mechanistic basis for DNA recombination by continuous HJ branch migration. Branch migration allows RuvC to scan DNA until it finds its consensus sequence, where it cleaves and resolves cruciform DNA. The chain is Holliday junction branch migration complex subunit RuvB from Rhizorhabdus wittichii (strain DSM 6014 / CCUG 31198 / JCM 15750 / NBRC 105917 / EY 4224 / RW1) (Sphingomonas wittichii).